A 455-amino-acid polypeptide reads, in one-letter code: Argininosuccinate lyase (455 aa).

This sequence belongs to the lyase 1 family. Argininosuccinate lyase subfamily.

It localises to the cytoplasm. It catalyses the reaction 2-(N(omega)-L-arginino)succinate = fumarate + L-arginine. It functions in the pathway amino-acid biosynthesis; L-arginine biosynthesis; L-arginine from L-ornithine and carbamoyl phosphate: step 3/3. In Shewanella sp. (strain MR-4), this protein is Argininosuccinate lyase.